Here is a 514-residue protein sequence, read N- to C-terminus: Bifunctional lysine-specific demethylase and histidyl-hydroxylase NO66 (514 aa).

The segment at 1–53 is disordered; it reads MKRGLEEEIEEMSEEEVGVNNNNNGKKKKKKVVKKSKPVPLTKSVPQVSSQPL. The span at 7 to 17 shows a compositional bias: acidic residues; that stretch reads EEIEEMSEEEV. Residues 25-37 show a composition bias toward basic residues; that stretch reads GKKKKKKVVKKSK. Over residues 44–53 the composition is skewed to polar residues; it reads SVPQVSSQPL. Positions 180-327 constitute a JmjC domain; that stretch reads CSVRLLNPQT…IGKVLNRALE (148 aa). Fe cation contacts are provided by His-226, Asp-228, and His-291.

The protein belongs to the ROX family. NO66 subfamily. Requires Fe(2+) as cofactor.

It is found in the nucleus. The catalysed reaction is N(6),N(6)-dimethyl-L-lysyl(36)-[histone H3] + 2 2-oxoglutarate + 2 O2 = L-lysyl(36)-[histone H3] + 2 formaldehyde + 2 succinate + 2 CO2. Oxygenase that can act as both a histone lysine demethylase and a ribosomal histidine hydroxylase. Specifically demethylates 'Lys-4' (H3K4me) and 'Lys-36' (H3K36me) of histone H3, thereby playing a central role in histone code. This chain is Bifunctional lysine-specific demethylase and histidyl-hydroxylase NO66 (jcdg), found in Dictyostelium discoideum (Social amoeba).